The primary structure comprises 482 residues: Zinc metalloproteinase/disintegrin (482 aa).

A signal peptide spans 1–20; the sequence is MIQVLLVTICLAAFPYQGSS. A propeptide spanning residues 21–189 is cleaved from the precursor; that stretch reads MILESGNVND…IKASQLVVTA (169 aa). One can recognise a Peptidase M12B domain in the interval 197–393; sequence RYIELVVVAD…HNPQCILNEP (197 aa). Glu-200 and Asp-284 together coordinate Ca(2+). Intrachain disulfides connect Cys-308–Cys-388 and Cys-348–Cys-372. His-333 lines the Zn(2+) pocket. Glu-334 is a catalytic residue. Zn(2+) contacts are provided by His-337 and His-343. Residues Cys-388 and Asn-391 each contribute to the Ca(2+) site. The propeptide occupies 394–409; the sequence is LRTDTVSTPVSGNELL. One can recognise a Disintegrin domain in the interval 401–482; the sequence is TPVSGNELLE…AGCPRNPFHA (82 aa). 6 disulfide bridges follow: Cys-415-Cys-430, Cys-417-Cys-425, Cys-424-Cys-447, Cys-438-Cys-444, Cys-443-Cys-468, and Cys-456-Cys-475. Residues 460–462 carry the Cell attachment site motif; sequence RGD.

It belongs to the venom metalloproteinase (M12B) family. P-II subfamily. P-IId sub-subfamily. As to quaternary structure, homodimer; disulfide-linked (disintegrin). Zn(2+) is required as a cofactor. As to expression, expressed by the venom gland.

It localises to the secreted. In terms of biological role, this recombinant protein hydrolyzes fibronectin, but has no effect on type I gelatin and type I to V collagens. Selectively hydrolyzes the Aalpha-chain of fibrinogen (FGA), but has no effect on fibrin. Inhibits ADP-induced platelet aggregation. Its function is as follows. Recombinant metalloproteinase-disintegrin Mt-d-I (393-408): hydrolyzes type I gelatin, type III and V collagens, but has no effect on type I, II, IV collagens and fibronectin. Selectively hydrolyzes the Aalpha-chain of fibrinogen, but has no effect on fibrin. May induce hemorrhage in vascular tissue. Strongly inhibits ADP-induced platelet aggregation. When concentrated, Mt-d-I undergoes autoproteolytic processing into metalloproteinase and disintegrin. The protein is Zinc metalloproteinase/disintegrin of Gloydius brevicauda (Korean slamosa snake).